The sequence spans 148 residues: IQ domain-containing protein F5 (148 aa).

2 consecutive IQ domains span residues 11 to 40 (ETSA…SAWI) and 67 to 96 (KTWA…AVRI).

This is IQ domain-containing protein F5 (Iqcf5) from Mus musculus (Mouse).